The sequence spans 156 residues: Crossover junction endodeoxyribonuclease RuvC (156 aa).

Residues Asp7, Glu66, and Asp138 contribute to the active site. Mg(2+) is bound by residues Asp7, Glu66, and Asp138.

The protein belongs to the RuvC family. As to quaternary structure, homodimer which binds Holliday junction (HJ) DNA. The HJ becomes 2-fold symmetrical on binding to RuvC with unstacked arms; it has a different conformation from HJ DNA in complex with RuvA. In the full resolvosome a probable DNA-RuvA(4)-RuvB(12)-RuvC(2) complex forms which resolves the HJ. Requires Mg(2+) as cofactor.

It localises to the cytoplasm. The catalysed reaction is Endonucleolytic cleavage at a junction such as a reciprocal single-stranded crossover between two homologous DNA duplexes (Holliday junction).. In terms of biological role, the RuvA-RuvB-RuvC complex processes Holliday junction (HJ) DNA during genetic recombination and DNA repair. Endonuclease that resolves HJ intermediates. Cleaves cruciform DNA by making single-stranded nicks across the HJ at symmetrical positions within the homologous arms, yielding a 5'-phosphate and a 3'-hydroxyl group; requires a central core of homology in the junction. The consensus cleavage sequence is 5'-(A/T)TT(C/G)-3'. Cleavage occurs on the 3'-side of the TT dinucleotide at the point of strand exchange. HJ branch migration catalyzed by RuvA-RuvB allows RuvC to scan DNA until it finds its consensus sequence, where it cleaves and resolves the cruciform DNA. In Ehrlichia canis (strain Jake), this protein is Crossover junction endodeoxyribonuclease RuvC.